A 562-amino-acid chain; its full sequence is Serine/threonine-protein kinase STN7, chloroplastic (562 aa).

The transit peptide at 1-45 (MATISPGGAYIGTPSPFLGKKLKPFSLTSPILSFKPTVKLNSSCR) directs the protein to the chloroplast. The Protein kinase domain maps to 134 to 452 (FVVGKKLGEG…AKAALAHPYF (319 aa)). Residues 140–148 (LGEGSFGVV) and lysine 167 each bind ATP. The Proton acceptor role is filled by aspartate 279. The residue at position 526 (serine 526) is a Phosphoserine. 2 positions are modified to phosphothreonine: threonine 537 and threonine 541.

This sequence belongs to the protein kinase superfamily. Ser/Thr protein kinase family. Post-translationally, phosphorylated.

It localises to the plastid. The protein resides in the chloroplast thylakoid membrane. It catalyses the reaction L-seryl-[protein] + ATP = O-phospho-L-seryl-[protein] + ADP + H(+). The enzyme catalyses L-threonyl-[protein] + ATP = O-phospho-L-threonyl-[protein] + ADP + H(+). In terms of biological role, serine/threonine protein kinase required for state transition by phosphorylating light-harvesting complex II outer antennae (LCHII). State transition plays a central role in response to environmental changes and allows to adjust to changing light conditions via the redistribution of light excitation energy between photosystem II (PSII) and photosystem I (PSI). Phosphorylates the minor light harvesting protein LHCB4.2/CP29 and is involved in the light-dependent phosphorylation of TSP9. Acts as a key component of the long-term response (LTR) signaling pathway. Mediates phosphorylation-dependent PTAC16 subcellular localization to regulate plastid gene expression. In Arabidopsis thaliana (Mouse-ear cress), this protein is Serine/threonine-protein kinase STN7, chloroplastic (STN7).